Consider the following 339-residue polypeptide: Dual specificity protein phosphatase 12 (339 aa).

N-acetylmethionine is present on M1. Residues 1 to 25 are disordered; it reads MLEAQGSNHGCERQAPTASPASSAG. Residues 26 to 170 enclose the Tyrosine-protein phosphatase domain; it reads HAVEVRPGLY…LKLYEAMGYE (145 aa). The Phosphocysteine intermediate role is filled by C114. 115 to 120 contributes to the substrate binding site; that stretch reads HAGVSR. At S334 the chain carries Phosphoserine.

It belongs to the protein-tyrosine phosphatase family. Non-receptor class dual specificity subfamily. Monomer. Zn(2+) is required as a cofactor.

The protein resides in the nucleus. It is found in the cytoplasm. Its subcellular location is the cytosol. The enzyme catalyses O-phospho-L-tyrosyl-[protein] + H2O = L-tyrosyl-[protein] + phosphate. The catalysed reaction is O-phospho-L-seryl-[protein] + H2O = L-seryl-[protein] + phosphate. It carries out the reaction O-phospho-L-threonyl-[protein] + H2O = L-threonyl-[protein] + phosphate. Its function is as follows. Dual specificity phosphatase; can dephosphorylate both phosphotyrosine and phosphoserine or phosphothreonine residues. Can dephosphorylate glucokinase (in vitro). Has phosphatase activity with the synthetic substrate 6,8-difluoro-4-methylumbelliferyl phosphate and other in vitro substrates. In Mus musculus (Mouse), this protein is Dual specificity protein phosphatase 12 (Dusp12).